Consider the following 318-residue polypeptide: Transaldolase (318 aa).

Lys126 acts as the Schiff-base intermediate with substrate in catalysis.

This sequence belongs to the transaldolase family. Type 1 subfamily. As to quaternary structure, homodimer.

It localises to the cytoplasm. The enzyme catalyses D-sedoheptulose 7-phosphate + D-glyceraldehyde 3-phosphate = D-erythrose 4-phosphate + beta-D-fructose 6-phosphate. It participates in carbohydrate degradation; pentose phosphate pathway; D-glyceraldehyde 3-phosphate and beta-D-fructose 6-phosphate from D-ribose 5-phosphate and D-xylulose 5-phosphate (non-oxidative stage): step 2/3. In terms of biological role, transaldolase is important for the balance of metabolites in the pentose-phosphate pathway. This chain is Transaldolase, found in Cupriavidus necator (strain ATCC 17699 / DSM 428 / KCTC 22496 / NCIMB 10442 / H16 / Stanier 337) (Ralstonia eutropha).